The primary structure comprises 155 residues: Ribonuclease H (155 aa).

Residues 1–146 (MPELFAYTDG…ADELARAGMK (146 aa)) form the RNase H type-1 domain. Mg(2+)-binding residues include Asp9, Glu52, Asp74, and Asp138.

The protein belongs to the RNase H family. Monomer. Requires Mg(2+) as cofactor.

The protein localises to the cytoplasm. The catalysed reaction is Endonucleolytic cleavage to 5'-phosphomonoester.. Its function is as follows. Endonuclease that specifically degrades the RNA of RNA-DNA hybrids. The sequence is that of Ribonuclease H from Ruegeria pomeroyi (strain ATCC 700808 / DSM 15171 / DSS-3) (Silicibacter pomeroyi).